Here is a 118-residue protein sequence, read N- to C-terminus: MNKKVEGLTKETEAANYLSEQGYQILARNYRCRLGEIDIVARENGYLVFVEVKYRTNVEKGFPEEAITIQKQRRITNTAKYYLLVNRLPESTPCRFDVVVMLKEEIRLIKNAFDAYGS.

Belongs to the UPF0102 family.

In Lachnoclostridium phytofermentans (strain ATCC 700394 / DSM 18823 / ISDg) (Clostridium phytofermentans), this protein is UPF0102 protein Cphy_2398.